Reading from the N-terminus, the 60-residue chain is Sec-independent protein translocase protein TatA (60 aa).

The helical transmembrane segment at 1–21 (MAGLGVTELLIILAIVIVLFG) threads the bilayer.

The protein belongs to the TatA/E family. As to quaternary structure, forms a complex with TatC.

The protein resides in the cell membrane. Functionally, part of the twin-arginine translocation (Tat) system that transports large folded proteins containing a characteristic twin-arginine motif in their signal peptide across membranes. TatA could form the protein-conducting channel of the Tat system. The protein is Sec-independent protein translocase protein TatA of Herpetosiphon aurantiacus (strain ATCC 23779 / DSM 785 / 114-95).